The sequence spans 122 residues: HetP-like commitment protein Alr3234 (122 aa).

It belongs to the HetP family. In terms of assembly, in bacterial two-hybrid assays interacts robustly with itself, Asl1930, Alr2902 and HetR and weakly with HetP.

Functionally, delays heterocyst differentiation and commitment when nitrogen is limiting. Interplay between the 4 HetP paralogs controls the timing of commitment to heterocyst formation and its duration. Epistatic analysis show that the 3 paralogs act upstream of hetP to delay commitment (asl1930, alr3234) or inhibit development (alr2902). Asl1930 and Alr3234 must also attenuate the activity of Alr2902. Ectopic expression does not complement a hetP deletion. The chain is HetP-like commitment protein Alr3234 from Nostoc sp. (strain PCC 7120 / SAG 25.82 / UTEX 2576).